The sequence spans 143 residues: Nucleoside diphosphate kinase (143 aa).

6 residues coordinate ATP: K11, F59, R87, T93, R104, and N114. The active-site Pros-phosphohistidine intermediate is the H117.

Belongs to the NDK family. In terms of assembly, homotetramer. Requires Mg(2+) as cofactor.

It localises to the cytoplasm. It catalyses the reaction a 2'-deoxyribonucleoside 5'-diphosphate + ATP = a 2'-deoxyribonucleoside 5'-triphosphate + ADP. The enzyme catalyses a ribonucleoside 5'-diphosphate + ATP = a ribonucleoside 5'-triphosphate + ADP. Its function is as follows. Major role in the synthesis of nucleoside triphosphates other than ATP. The ATP gamma phosphate is transferred to the NDP beta phosphate via a ping-pong mechanism, using a phosphorylated active-site intermediate. In Tolumonas auensis (strain DSM 9187 / NBRC 110442 / TA 4), this protein is Nucleoside diphosphate kinase.